Consider the following 267-residue polypeptide: Aliphatic sulfonates import ATP-binding protein SsuB 1 (267 aa).

The ABC transporter domain occupies 35-249 (VRVRGLRRVF…RRADPAFDRL (215 aa)). 67–74 (GRSGSGKS) lines the ATP pocket.

This sequence belongs to the ABC transporter superfamily. Aliphatic sulfonates importer (TC 3.A.1.17.2) family. In terms of assembly, the complex is composed of two ATP-binding proteins (SsuB), two transmembrane proteins (SsuC) and a solute-binding protein (SsuA).

It is found in the cell membrane. The catalysed reaction is ATP + H2O + aliphatic sulfonate-[sulfonate-binding protein]Side 1 = ADP + phosphate + aliphatic sulfonateSide 2 + [sulfonate-binding protein]Side 1.. Its function is as follows. Part of the ABC transporter complex SsuABC involved in aliphatic sulfonates import. Responsible for energy coupling to the transport system. This Frankia alni (strain DSM 45986 / CECT 9034 / ACN14a) protein is Aliphatic sulfonates import ATP-binding protein SsuB 1.